A 526-amino-acid chain; its full sequence is CTP synthase (526 aa).

Residues 1–270 (MKYIFVTGGV…ADVLSTHLGL (270 aa)) form an amidoligase domain region. Ser-12 lines the CTP pocket. Ser-12 lines the UTP pocket. ATP-binding positions include 13–18 (GLGKGI) and Asp-70. Residues Asp-70 and Glu-145 each coordinate Mg(2+). CTP-binding positions include 152-154 (DIE), 191-196 (KTKPTQ), and Lys-227. Residues 191–196 (KTKPTQ) and Lys-227 contribute to the UTP site. Residues 293–525 (VAIVSKYGIE…VEACRANKRT (233 aa)) form the Glutamine amidotransferase type-1 domain. Residue Gly-349 coordinates L-glutamine. Cys-376 serves as the catalytic Nucleophile; for glutamine hydrolysis. Residues 377–380 (LGFQ), Glu-400, and Arg-455 each bind L-glutamine. Catalysis depends on residues His-498 and Glu-500.

This sequence belongs to the CTP synthase family. Homotetramer.

It carries out the reaction UTP + L-glutamine + ATP + H2O = CTP + L-glutamate + ADP + phosphate + 2 H(+). The catalysed reaction is L-glutamine + H2O = L-glutamate + NH4(+). The enzyme catalyses UTP + NH4(+) + ATP = CTP + ADP + phosphate + 2 H(+). It functions in the pathway pyrimidine metabolism; CTP biosynthesis via de novo pathway; CTP from UDP: step 2/2. Allosterically activated by GTP, when glutamine is the substrate; GTP has no effect on the reaction when ammonia is the substrate. The allosteric effector GTP functions by stabilizing the protein conformation that binds the tetrahedral intermediate(s) formed during glutamine hydrolysis. Inhibited by the product CTP, via allosteric rather than competitive inhibition. Its function is as follows. Catalyzes the ATP-dependent amination of UTP to CTP with either L-glutamine or ammonia as the source of nitrogen. Regulates intracellular CTP levels through interactions with the four ribonucleotide triphosphates. This chain is CTP synthase, found in Methanoregula boonei (strain DSM 21154 / JCM 14090 / 6A8).